Reading from the N-terminus, the 191-residue chain is Prophage tail fiber assembly protein homolog TfaR (191 aa).

This sequence belongs to the tfa family.

The polypeptide is Prophage tail fiber assembly protein homolog TfaR (tfaR) (Escherichia coli (strain K12)).